Reading from the N-terminus, the 225-residue chain is Putative tyrosine-protein phosphatase OCA1 (225 aa).

A compositionally biased stretch (acidic residues) spans 1 to 11 (MTDNCREDDDN). The interval 1–24 (MTDNCREDDDNLGTSGDNALSAPT) is disordered. Residues 12-24 (LGTSGDNALSAPT) are compositionally biased toward polar residues. One can recognise a Tyrosine-protein phosphatase domain in the interval 42–196 (NFCPVERYLY…FDTKSVTIDK (155 aa)). Cys-138 acts as the Phosphocysteine intermediate in catalysis.

Belongs to the protein-tyrosine phosphatase family.

The protein resides in the cytoplasm. The enzyme catalyses O-phospho-L-tyrosyl-[protein] + H2O = L-tyrosyl-[protein] + phosphate. Putative tyrosine-protein phosphatase required for protection against superoxide stress. The chain is Putative tyrosine-protein phosphatase OCA1 (OCA1) from Eremothecium gossypii (strain ATCC 10895 / CBS 109.51 / FGSC 9923 / NRRL Y-1056) (Yeast).